Consider the following 611-residue polypeptide: ANK repeat-containing protein nipk-1 (611 aa).

The stretch at 91–149 forms a coiled coil; that stretch reads NSKSKKKTENQETKEKDEEAEEKKDGPPKDDKELKMKKEKEQEDENAELDEQKKDGDLL. 3 disordered regions span residues 92–167, 212–255, and 280–333; these read SKSK…SHPY, ISAS…DTSR, and TKEE…LSPR. A compositionally biased stretch (basic and acidic residues) spans 97-131; sequence KTENQETKEKDEEAEEKKDGPPKDDKELKMKKEKE. Polar residues-rich tracts occupy residues 212–223, 239–255, and 315–333; these read ISASTTPDTVLS, ESLQ…DTSR, and GTCS…LSPR. ANK repeat units follow at residues 375-405, 417-446, 452-482, 486-527, and 532-561; these read DGDT…TMNE, FGET…SPNS, VGDS…RVNE, DGQT…DPTI, and TGKT…EDTF.

The protein belongs to the iASPP family. As to expression, expressed in the nervous system.

Functionally, acts downstream of the receptor complex composed of ilcr-1 and ilcr-2, which is a signaling complex that modulates neuronal activity and animal behavior in response to sensory neuron input. Mediates signaling of the complex. This is ANK repeat-containing protein nipk-1 from Caenorhabditis elegans.